The sequence spans 253 residues: 5-oxoprolinase subunit A (253 aa).

Belongs to the LamB/PxpA family. Forms a complex composed of PxpA, PxpB and PxpC.

The enzyme catalyses 5-oxo-L-proline + ATP + 2 H2O = L-glutamate + ADP + phosphate + H(+). Its function is as follows. Catalyzes the cleavage of 5-oxoproline to form L-glutamate coupled to the hydrolysis of ATP to ADP and inorganic phosphate. In Bacillus cereus (strain B4264), this protein is 5-oxoprolinase subunit A.